A 350-amino-acid chain; its full sequence is Peroxidase 24 (350 aa).

Residues Met1–Gly27 form the signal peptide. 4 disulfide bridges follow: Cys55–Cys135, Cys88–Cys93, Cys141–Cys346, and Cys221–Cys253. Asn73 carries N-linked (GlcNAc...) asparagine glycosylation. The active-site Proton acceptor is the His86. Ca(2+)-binding residues include Asp87, Val90, Gly92, Asp94, and Ser96. Pro184 serves as a coordination point for substrate. An N-linked (GlcNAc...) asparagine glycan is attached at Asn189. His214 provides a ligand contact to heme b. Thr215 lines the Ca(2+) pocket. A glycan (N-linked (GlcNAc...) asparagine) is linked at Asn230. Asp269 and Asp277 together coordinate Ca(2+).

The protein belongs to the peroxidase family. Classical plant (class III) peroxidase subfamily. Heme b is required as a cofactor. Requires Ca(2+) as cofactor.

It localises to the secreted. It carries out the reaction 2 a phenolic donor + H2O2 = 2 a phenolic radical donor + 2 H2O. Functionally, removal of H(2)O(2), oxidation of toxic reductants, biosynthesis and degradation of lignin, suberization, auxin catabolism, response to environmental stresses such as wounding, pathogen attack and oxidative stress. These functions might be dependent on each isozyme/isoform in each plant tissue. The polypeptide is Peroxidase 24 (PER24) (Arabidopsis thaliana (Mouse-ear cress)).